The chain runs to 273 residues: Homeobox protein Nkx-2.2 (273 aa).

Disordered regions lie at residues 1–56 (MSLT…LDAV) and 90–131 (LAAG…KRKR). Acidic residues predominate over residues 20–38 (DTNDEEGSVAEGPEEENEG). A DNA-binding region (homeobox) is located at residues 128–187 (KRKRRVLFSKAQTYELERRFRQQRYLSAPEREHLASLIRLTPTQVKIWFQNHRYKMKRAR).

Belongs to the NK-2 homeobox family. Interacts with OLIG2.

It localises to the nucleus. In terms of biological role, transcriptional activator involved in the development of insulin-producting beta cells in the endocrine pancreas. May also be involved in specifying diencephalic neuromeric boundaries, and in controlling the expression of genes that play a role in axonal guidance. Binds to elements within the NEUROD1 promoter. The protein is Homeobox protein Nkx-2.2 (NKX2-2) of Homo sapiens (Human).